Here is a 287-residue protein sequence, read N- to C-terminus: Syntaxin-11 (287 aa).

A coiled-coil region spans residues Leu-41 to Arg-71. Positions Leu-204–Ala-266 constitute a t-SNARE coiled-coil homology domain.

Belongs to the syntaxin family. Interacts with the SNARE proteins SNAP-23 and VAMP.

The protein localises to the membrane. Its subcellular location is the golgi apparatus. It is found in the trans-Golgi network membrane. In terms of biological role, SNARE that acts to regulate protein transport between late endosomes and the trans-Golgi network. In Homo sapiens (Human), this protein is Syntaxin-11 (STX11).